The primary structure comprises 363 residues: Protein arginine N-methyltransferase 2 (363 aa).

ANK repeat units lie at residues 22–46 (AAQT…FQDD) and 48–80 (LGWS…AVDK). One can recognise an RMT2 domain in the interval 111 to 363 (KTSAGDNLVF…RLPIAKMSLI (253 aa)). Residues F120, 186 to 191 (FGLGIV), 209 to 211 (EAH), 236 to 237 (WQ), and D265 contribute to the S-adenosyl-L-methionine site.

This sequence belongs to the class I-like SAM-binding methyltransferase superfamily. RMT2 methyltransferase family. Monomer.

The protein resides in the cytoplasm. The protein localises to the nucleus. Its function is as follows. S-adenosyl-L-methionine-dependent protein-arginine N-methyltransferase that methylates the delta-nitrogen atom of arginine residues to form N5-methylarginine (type IV) in target proteins. Monomethylates ribosomal protein L12. The protein is Protein arginine N-methyltransferase 2 of Cryptococcus neoformans var. neoformans serotype D (strain B-3501A) (Filobasidiella neoformans).